The following is a 307-amino-acid chain: Zygote arrest protein 2.L (307 aa).

The segment at Leu-138–Lys-200 is disordered. Residues Leu-156–Pro-186 show a composition bias toward basic and acidic residues. The 3CxxC-type zinc finger occupies Gln-208–Lys-293.

Belongs to the ZAR1 family. As to expression, expressed in oocytes.

It is found in the cytoplasm. The protein resides in the cytoplasmic ribonucleoprotein granule. MRNA-binding protein required for maternal mRNA storage, translation and degradation during oocyte maturation. Probably promotes formation of some phase-separated membraneless compartment that stores maternal mRNAs in oocytes: acts by undergoing liquid-liquid phase separation upon binding to maternal mRNAs. Binds to the 3'-UTR of maternal mRNAs, inhibiting their translation. The sequence is that of Zygote arrest protein 2.L (zar2.L) from Xenopus laevis (African clawed frog).